The following is a 318-amino-acid chain: Formimidoylglutamase (318 aa).

Histidine 130, aspartate 155, histidine 157, aspartate 159, aspartate 246, and aspartate 248 together coordinate Mn(2+).

Belongs to the arginase family. It depends on Mn(2+) as a cofactor.

The catalysed reaction is N-formimidoyl-L-glutamate + H2O = formamide + L-glutamate. It functions in the pathway amino-acid degradation; L-histidine degradation into L-glutamate; L-glutamate from N-formimidoyl-L-glutamate (hydrolase route): step 1/1. Catalyzes the conversion of N-formimidoyl-L-glutamate to L-glutamate and formamide. The chain is Formimidoylglutamase from Klebsiella pneumoniae (strain 342).